The primary structure comprises 153 residues: Histone H2B.3 (153 aa).

Composition is skewed to basic and acidic residues over residues 1–28 and 36–53; these read MAPKAEKKPAAKKPAEEEPAAEKAEKAL and EKRLPAGKAEKGSGEGRK. A disordered region spans residues 1–61; the sequence is MAPKAEKKPA…RKAGRKKAKK (61 aa). N6-acetyllysine occurs at positions 7 and 37. Lys-149 is covalently cross-linked (Glycyl lysine isopeptide (Lys-Gly) (interchain with G-Cter in ubiquitin)).

This sequence belongs to the histone H2B family. The nucleosome is a histone octamer containing two molecules each of H2A, H2B, H3 and H4 assembled in one H3-H4 heterotetramer and two H2A-H2B heterodimers. The octamer wraps approximately 147 bp of DNA. Post-translationally, can be acetylated to form H2BK6ac and H2BK33ac. In terms of processing, monoubiquitinated by BRE1 to form H2BK143ub1 and deubiquitinated by UBP26. Required for heterochromatic histone H3 di- and trimethylation at H3K4me. May give a specific tag for epigenetic transcriptional activation.

The protein resides in the nucleus. It localises to the chromosome. Core component of nucleosome. Nucleosomes wrap and compact DNA into chromatin, limiting DNA accessibility to the cellular machineries which require DNA as a template. Histones thereby play a central role in transcription regulation, DNA repair, DNA replication and chromosomal stability. DNA accessibility is regulated via a complex set of post-translational modifications of histones, also called histone code, and nucleosome remodeling. The chain is Histone H2B.3 (H2B.3) from Oryza sativa subsp. indica (Rice).